Reading from the N-terminus, the 212-residue chain is Adenylate kinase (212 aa).

10-15 lines the ATP pocket; sequence GAGKGT. The tract at residues 30–59 is NMP; the sequence is STGDMFRAAMANQTEMGRLAKSYIDKGELV. Residues Thr31, Arg36, 57 to 59, 86 to 89, and Gln93 each bind AMP; these read ELV and GYPR. The interval 127–159 is LID; it reads GRIINRKTGETFHKVFNPPVDYKEEDYYQREDD. Residues Arg128 and 137-138 each bind ATP; that span reads TF. Residues Arg156 and Arg167 each coordinate AMP. Gln195 is a binding site for ATP.

The protein belongs to the adenylate kinase family. Monomer.

The protein resides in the cytoplasm. It carries out the reaction AMP + ATP = 2 ADP. Its pathway is purine metabolism; AMP biosynthesis via salvage pathway; AMP from ADP: step 1/1. Catalyzes the reversible transfer of the terminal phosphate group between ATP and AMP. Plays an important role in cellular energy homeostasis and in adenine nucleotide metabolism. The sequence is that of Adenylate kinase from Streptococcus pyogenes serotype M1.